A 305-amino-acid chain; its full sequence is Heterogeneous nuclear ribonucleoprotein A0 (305 aa).

The residue at position 1 (Met1) is an N-acetylmethionine. The RRM 1 domain occupies 7–86 (CKLFIGGLNV…VELKRAVSRE (80 aa)). Phosphoserine is present on Ser68. A Glycyl lysine isopeptide (Lys-Gly) (interchain with G-Cter in SUMO2) cross-link involves residue Lys80. Phosphoserine; by MAPKAPK2 is present on Ser84. Glycyl lysine isopeptide (Lys-Gly) (interchain with G-Cter in SUMO2) cross-links involve residues Lys96, Lys98, Lys99, and Lys106. One can recognise an RRM 2 domain in the interval 98 to 175 (KKLFVGGLKG…HRVEVKKAVP (78 aa)). The residue at position 133 (Lys133) is an N6-acetyllysine. Arg139 carries the post-translational modification Omega-N-methylarginine. Glycyl lysine isopeptide (Lys-Gly) (interchain with G-Cter in SUMO2) cross-links involve residues Lys154, Lys159, Lys172, and Lys176. Disordered stretches follow at residues 174–214 (VPKE…KGGG) and 262–305 (QSSY…GSSF). Gly residues-rich tracts occupy residues 181–200 (SGGGGGGSRSSRGGRGGRGR) and 269–281 (KSGGGGGGGGSSW). At Ser188 the chain carries Phosphoserine. Position 284 is an omega-N-methylarginine (Arg284). The segment covering 290–305 (YRGGYGGGGGYGGSSF) has biased composition (gly residues). Residue Arg291 is modified to Asymmetric dimethylarginine; alternate. Arg291 carries the dimethylated arginine; alternate modification. An Omega-N-methylarginine; alternate modification is found at Arg291.

Phosphorylated at Ser-84 by MAPKAPK2 in response to LPS treatment, promoting stabilization of GADD45A mRNA. Post-translationally, arg-291 is dimethylated, probably to asymmetric dimethylarginine.

It localises to the nucleus. MRNA-binding component of ribonucleosomes. Specifically binds AU-rich element (ARE)-containing mRNAs. Involved in post-transcriptional regulation of cytokines mRNAs. In Homo sapiens (Human), this protein is Heterogeneous nuclear ribonucleoprotein A0 (HNRNPA0).